The chain runs to 793 residues: MSYVSGYVPVIPLKNSVLFPDISMPLRIGREKSIAALQKALRDNHWVILLTQKNPNASVDKIEDLYQVGTLAKVESFRMEEDGSYNIFVKAHQRVRLIHSRDSEGHIEAQTEALEDSGRLDKKTEEALLSSLRQLSDDLLDLLPGNTRQIREMIAEIEDLQTLVNMCAAYADINISDKQEILEIPLLKDRALKLLDRLQELKERLKIQRGIRDKLQESFQQNQKESILREQMRVIREELGDHEGEDLFAKFKDKIDKAGMPPEALELAKNQLRRLETSNSASPEYQMIRTHLELMTSLPWNQSSAQQDIDLEAAERVLNEDHYGLEKIKKRILQHLAVMKLRKSQQGSILMFIGPPGVGKTSLGKSIARALGKKYVRVALGGVRDDAEIRGHRRTYIGALPGRIIAGIKKAGENDPVFILDEIDKLTRGFGGDPASAMLEVLDPEQNNTFQDHYLDTPFDLSKVFFIATANSLEGIPLPLLDRMEVIDLSGYTVDEKRQIARSHLWPKQLKEHGLEENQLQITDQALTKLLTHYTREAGVRDLQRKIASICKHMSLKIIKSEGLPLLVEEQDLEDIFGAERFSADMIGSLLPPGVVTGLAWTPVGGDILFIESAQMPGKGNLLLTGQLGEVMQESAKIALTLLKSRLPLLDPLLDFAKKDIHVHVPAGAIPKDGPSAGITMLTSMASMLLNKPVDPKVAMTGEISLRGSVMPVGGIKEKVIAAHRAGVQEILLCKRNEKDLREIPEDIRKDLRFHFVEDVNEVLKITLGVNVPKWDQVQLPPPSPLSSTDAGT.

A Lon N-terminal domain is found at 8–202 (VPVIPLKNSV…KLLDRLQELK (195 aa)). 354-361 (GPPGVGKT) is an ATP binding site. One can recognise a Lon proteolytic domain in the interval 590 to 770 (LLPPGVVTGL…NEVLKITLGV (181 aa)). Active-site residues include Ser-676 and Lys-719.

This sequence belongs to the peptidase S16 family. In terms of assembly, homohexamer. Organized in a ring with a central cavity.

The protein resides in the cytoplasm. The catalysed reaction is Hydrolysis of proteins in presence of ATP.. Its function is as follows. ATP-dependent serine protease that mediates the selective degradation of mutant and abnormal proteins as well as certain short-lived regulatory proteins. Required for cellular homeostasis and for survival from DNA damage and developmental changes induced by stress. Degrades polypeptides processively to yield small peptide fragments that are 5 to 10 amino acids long. Binds to DNA in a double-stranded, site-specific manner. The polypeptide is Lon protease 1 (Bdellovibrio bacteriovorus (strain ATCC 15356 / DSM 50701 / NCIMB 9529 / HD100)).